The primary structure comprises 282 residues: MERNVILAKNAGFCFGVKRAVDEAIKYQKEFGKKIYTLGPLIHNNDVVNYLEDNNIFAIELSDADSLKKGDVVLIRSHGVKESVIKDLTDKGLIVKNATCPYVTNIQLKVKKCYEQGYKIIIVGDKNHPEVIGINGWCNDSAIITNGKTELENIPAKVCVVSQTTEKKETWNKVLNEIVRASKEIVAFNTICSATDVRQKSVQELSKEADLVFVIGGKNSSNTTKLYEICKKECPKSYHIENVKELDESLLEDESVKTIGITAGASTPDWIINEVISKIKEL.

Residue Cys-14 coordinates [4Fe-4S] cluster. Residues His-43 and His-78 each coordinate (2E)-4-hydroxy-3-methylbut-2-enyl diphosphate. Residues His-43 and His-78 each contribute to the dimethylallyl diphosphate site. Residues His-43 and His-78 each contribute to the isopentenyl diphosphate site. [4Fe-4S] cluster is bound at residue Cys-100. A (2E)-4-hydroxy-3-methylbut-2-enyl diphosphate-binding site is contributed by His-128. Position 128 (His-128) interacts with dimethylallyl diphosphate. His-128 is a binding site for isopentenyl diphosphate. The active-site Proton donor is the Glu-130. Thr-164 lines the (2E)-4-hydroxy-3-methylbut-2-enyl diphosphate pocket. Cys-192 provides a ligand contact to [4Fe-4S] cluster. Positions 220, 221, 222, and 266 each coordinate (2E)-4-hydroxy-3-methylbut-2-enyl diphosphate. 4 residues coordinate dimethylallyl diphosphate: Ser-220, Ser-221, Asn-222, and Ser-266. The isopentenyl diphosphate site is built by Ser-220, Ser-221, Asn-222, and Ser-266.

This sequence belongs to the IspH family. [4Fe-4S] cluster serves as cofactor.

It carries out the reaction isopentenyl diphosphate + 2 oxidized [2Fe-2S]-[ferredoxin] + H2O = (2E)-4-hydroxy-3-methylbut-2-enyl diphosphate + 2 reduced [2Fe-2S]-[ferredoxin] + 2 H(+). The catalysed reaction is dimethylallyl diphosphate + 2 oxidized [2Fe-2S]-[ferredoxin] + H2O = (2E)-4-hydroxy-3-methylbut-2-enyl diphosphate + 2 reduced [2Fe-2S]-[ferredoxin] + 2 H(+). It participates in isoprenoid biosynthesis; dimethylallyl diphosphate biosynthesis; dimethylallyl diphosphate from (2E)-4-hydroxy-3-methylbutenyl diphosphate: step 1/1. The protein operates within isoprenoid biosynthesis; isopentenyl diphosphate biosynthesis via DXP pathway; isopentenyl diphosphate from 1-deoxy-D-xylulose 5-phosphate: step 6/6. Its function is as follows. Catalyzes the conversion of 1-hydroxy-2-methyl-2-(E)-butenyl 4-diphosphate (HMBPP) into a mixture of isopentenyl diphosphate (IPP) and dimethylallyl diphosphate (DMAPP). Acts in the terminal step of the DOXP/MEP pathway for isoprenoid precursor biosynthesis. In Clostridium perfringens (strain 13 / Type A), this protein is 4-hydroxy-3-methylbut-2-enyl diphosphate reductase.